The primary structure comprises 303 residues: UDP-N-acetylenolpyruvoylglucosamine reductase (303 aa).

Residues 28-195 (KTGGPAQYLA…ISATFGLEPG (168 aa)) form the FAD-binding PCMH-type domain. Residue Arg-174 is part of the active site. The active-site Proton donor is Ser-224. Glu-294 is a catalytic residue.

Belongs to the MurB family. FAD serves as cofactor.

It localises to the cytoplasm. It carries out the reaction UDP-N-acetyl-alpha-D-muramate + NADP(+) = UDP-N-acetyl-3-O-(1-carboxyvinyl)-alpha-D-glucosamine + NADPH + H(+). The protein operates within cell wall biogenesis; peptidoglycan biosynthesis. Cell wall formation. In Lactobacillus gasseri (strain ATCC 33323 / DSM 20243 / BCRC 14619 / CIP 102991 / JCM 1131 / KCTC 3163 / NCIMB 11718 / NCTC 13722 / AM63), this protein is UDP-N-acetylenolpyruvoylglucosamine reductase.